A 434-amino-acid chain; its full sequence is Protein translocase subunit SecY (434 aa).

A run of 10 helical transmembrane segments spans residues 19 to 39, 73 to 93, 117 to 137, 148 to 168, 179 to 199, 209 to 229, 264 to 284, 300 to 320, 362 to 382, and 391 to 411; these read LFTL…IPGI, IFML…LLVY, YLTI…AKGI, YIFV…WFGE, TSLI…FNLF, VNPV…ILII, VLPV…LSGF, PNGF…TYFY, FSGS…QNIF, and IMGG…LIHI.

The protein belongs to the SecY/SEC61-alpha family. Component of the Sec protein translocase complex. Heterotrimer consisting of SecY, SecE and SecG subunits. The heterotrimers can form oligomers, although 1 heterotrimer is thought to be able to translocate proteins. Interacts with the ribosome. Interacts with SecDF, and other proteins may be involved. Interacts with SecA.

Its subcellular location is the cell inner membrane. Its function is as follows. The central subunit of the protein translocation channel SecYEG. Consists of two halves formed by TMs 1-5 and 6-10. These two domains form a lateral gate at the front which open onto the bilayer between TMs 2 and 7, and are clamped together by SecE at the back. The channel is closed by both a pore ring composed of hydrophobic SecY resides and a short helix (helix 2A) on the extracellular side of the membrane which forms a plug. The plug probably moves laterally to allow the channel to open. The ring and the pore may move independently. The sequence is that of Protein translocase subunit SecY from Borreliella burgdorferi (strain ATCC 35210 / DSM 4680 / CIP 102532 / B31) (Borrelia burgdorferi).